Consider the following 335-residue polypeptide: N-acetyl-gamma-glutamyl-phosphate reductase (335 aa).

Cys155 is a catalytic residue.

This sequence belongs to the NAGSA dehydrogenase family. Type 1 subfamily.

The protein localises to the cytoplasm. It carries out the reaction N-acetyl-L-glutamate 5-semialdehyde + phosphate + NADP(+) = N-acetyl-L-glutamyl 5-phosphate + NADPH + H(+). It functions in the pathway amino-acid biosynthesis; L-arginine biosynthesis; N(2)-acetyl-L-ornithine from L-glutamate: step 3/4. In terms of biological role, catalyzes the NADPH-dependent reduction of N-acetyl-5-glutamyl phosphate to yield N-acetyl-L-glutamate 5-semialdehyde. This Pasteurella multocida (strain Pm70) protein is N-acetyl-gamma-glutamyl-phosphate reductase.